Consider the following 467-residue polypeptide: Glutamate--tRNA ligase (467 aa).

A 'HIGH' region motif is present at residues 9–19; sequence PSPTGYLHIGG. The short motif at 237-241 is the 'KMSKS' region element; sequence KLSKR. Residue Lys240 coordinates ATP.

The protein belongs to the class-I aminoacyl-tRNA synthetase family. Glutamate--tRNA ligase type 1 subfamily. Monomer.

The protein localises to the cytoplasm. It catalyses the reaction tRNA(Glu) + L-glutamate + ATP = L-glutamyl-tRNA(Glu) + AMP + diphosphate. Catalyzes the attachment of glutamate to tRNA(Glu) in a two-step reaction: glutamate is first activated by ATP to form Glu-AMP and then transferred to the acceptor end of tRNA(Glu). This is Glutamate--tRNA ligase from Xanthomonas axonopodis pv. citri (strain 306).